Consider the following 243-residue polypeptide: UPF0246 protein gbs2036 (243 aa).

Belongs to the UPF0246 family.

This Streptococcus agalactiae serotype III (strain NEM316) protein is UPF0246 protein gbs2036.